A 370-amino-acid polypeptide reads, in one-letter code: Alanine racemase (370 aa).

Catalysis depends on Lys39, which acts as the Proton acceptor; specific for D-alanine. Residue Lys39 is modified to N6-(pyridoxal phosphate)lysine. Position 137 (Arg137) interacts with substrate. Residue Tyr258 is the Proton acceptor; specific for L-alanine of the active site. Met306 is a substrate binding site.

This sequence belongs to the alanine racemase family. The cofactor is pyridoxal 5'-phosphate.

The catalysed reaction is L-alanine = D-alanine. It functions in the pathway amino-acid biosynthesis; D-alanine biosynthesis; D-alanine from L-alanine: step 1/1. Catalyzes the interconversion of L-alanine and D-alanine. May also act on other amino acids. This is Alanine racemase (alr) from Methylobacterium nodulans (strain LMG 21967 / CNCM I-2342 / ORS 2060).